The primary structure comprises 1755 residues: Transposon Ty1-GR2 Gag-Pol polyprotein (1755 aa).

Residues 1 to 16 (MESQQLSQHSHISHGS) are compositionally biased toward low complexity. Disordered regions lie at residues 1–93 (MESQ…MMTQ), 126–173 (PQSQ…RPPP), and 352–421 (GSRN…SKST). Polar residues-rich tracts occupy residues 48–60 (TKAN…TPAS) and 127–152 (QSQF…GNTF). Positions 153-165 (TDSSSADSDMTST) are enriched in low complexity. The RNA-binding stretch occupies residues 299-401 (NNGIHINNKV…NSKSKTARAH (103 aa)). Residues 402–418 (NVSTSNNSPSTDNDSIS) are compositionally biased toward low complexity. Serine 416 is modified (phosphoserine). Aspartate 461 acts as the For protease activity; shared with dimeric partner in catalysis. Residues 583-640 (NVHTSESTRKYPYPFIHRMLAHANAQTIRYSLKNNTITYFNESDVDWSSAIDYQCPDC) form an integrase-type zinc finger-like region. The region spanning 660-835 (NSYEPFQYLH…AGLDISTLLP (176 aa)) is the Integrase catalytic domain. Mg(2+) contacts are provided by aspartate 671 and aspartate 736. Disordered regions lie at residues 956–1087 (SKAV…ETEK), 1092–1111 (RSPS…NIVP), and 1130–1187 (DLPL…DNET). The span at 960-969 (SPTDSTPPST) shows a compositional bias: low complexity. The segment covering 1005 to 1015 (STPQISNIEST) has biased composition (polar residues). Over residues 1038 to 1053 (ESSHASKSKDFRHSDS) the composition is skewed to basic and acidic residues. Composition is skewed to polar residues over residues 1054–1082 (YSEN…QISD) and 1101–1111 (PENNSSHNIVP). The short motif at 1178-1212 (KKRSLEDNETEIKVSRDTWNTKNMRSLEPPRSKKR) is the Bipartite nuclear localization signal element. A Reverse transcriptase Ty1/copia-type domain is found at 1338 to 1476 (NNYYITQLDI…DILGLEIKYQ (139 aa)). Residues aspartate 1346, aspartate 1427, aspartate 1428, aspartate 1610, glutamate 1652, and aspartate 1685 each coordinate Mg(2+). The region spanning 1610–1752 (DASYGNQPYY…IKTFKLLTNK (143 aa)) is the RNase H Ty1/copia-type domain.

In terms of assembly, the capsid protein forms a homotrimer, from which the VLPs are assembled. The protease is a homodimer, whose active site consists of two apposed aspartic acid residues. In terms of processing, initially, virus-like particles (VLPs) are composed of the structural unprocessed proteins Gag and Gag-Pol, and also contain the host initiator methionine tRNA (tRNA(i)-Met) which serves as a primer for minus-strand DNA synthesis, and a dimer of genomic Ty RNA. Processing of the polyproteins occurs within the particle and proceeds by an ordered pathway, called maturation. First, the protease (PR) is released by autocatalytic cleavage of the Gag-Pol polyprotein yielding capsid protein p45 and a Pol-p154 precursor protein. This cleavage is a prerequisite for subsequent processing of Pol-p154 at the remaining sites to release the mature structural and catalytic proteins. Maturation takes place prior to the RT reaction and is required to produce transposition-competent VLPs.

The protein resides in the cytoplasm. It is found in the nucleus. The enzyme catalyses DNA(n) + a 2'-deoxyribonucleoside 5'-triphosphate = DNA(n+1) + diphosphate. The catalysed reaction is Endonucleolytic cleavage to 5'-phosphomonoester.. Functionally, capsid protein (CA) is the structural component of the virus-like particle (VLP), forming the shell that encapsulates the retrotransposons dimeric RNA genome. The particles are assembled from trimer-clustered units and there are holes in the capsid shells that allow for the diffusion of macromolecules. CA also has nucleocapsid-like chaperone activity, promoting primer tRNA(i)-Met annealing to the multipartite primer-binding site (PBS), dimerization of Ty1 RNA and initiation of reverse transcription. The aspartyl protease (PR) mediates the proteolytic cleavages of the Gag and Gag-Pol polyproteins after assembly of the VLP. In terms of biological role, reverse transcriptase/ribonuclease H (RT) is a multifunctional enzyme that catalyzes the conversion of the retro-elements RNA genome into dsDNA within the VLP. The enzyme displays a DNA polymerase activity that can copy either DNA or RNA templates, and a ribonuclease H (RNase H) activity that cleaves the RNA strand of RNA-DNA heteroduplexes during plus-strand synthesis and hydrolyzes RNA primers. The conversion leads to a linear dsDNA copy of the retrotransposon that includes long terminal repeats (LTRs) at both ends. Its function is as follows. Integrase (IN) targets the VLP to the nucleus, where a subparticle preintegration complex (PIC) containing at least integrase and the newly synthesized dsDNA copy of the retrotransposon must transit the nuclear membrane. Once in the nucleus, integrase performs the integration of the dsDNA into the host genome. The protein is Transposon Ty1-GR2 Gag-Pol polyprotein (TY1B-GR2) of Saccharomyces cerevisiae (strain ATCC 204508 / S288c) (Baker's yeast).